A 188-amino-acid chain; its full sequence is EP300-interacting inhibitor of differentiation 1 (188 aa).

The tract at residues 1-122 (MSEMAELSEL…PEEEQLSGAG (122 aa)) is disordered. 2 stretches are compositionally biased toward acidic residues: residues 53-64 (LEEEGPMEEEEA) and 94-117 (FESE…EEEQ). The interval 55 to 121 (EEGPMEEEEA…YPEEEQLSGA (67 aa)) is interaction with NR0B2. The short motif at 179–183 (LGCDE) is the LXCXE motif element.

In terms of assembly, interacts via its LXCXE motif with the entire pocket region of RB1. Interacts with EP300, NR0B2 and TRIM27.

Its subcellular location is the nucleus. The protein localises to the cytoplasm. In terms of biological role, interacts with RB1 and EP300 and acts as a repressor of MYOD1 transactivation. Inhibits EP300 and CBP histone acetyltransferase activity. May be involved in coupling cell cycle exit to the transcriptional activation of genes required for cellular differentiation. May act as a candidate coinhibitory factor for NR0B2 that can be directly linked to transcription inhibitory mechanisms. This is EP300-interacting inhibitor of differentiation 1 from Pongo abelii (Sumatran orangutan).